A 138-amino-acid chain; its full sequence is Ribosomal RNA large subunit methyltransferase H (138 aa).

Residues glycine 86 and 105 to 110 contribute to the S-adenosyl-L-methionine site; that span reads LSPLTF.

Belongs to the RNA methyltransferase RlmH family. In terms of assembly, homodimer.

It localises to the cytoplasm. The catalysed reaction is pseudouridine(1915) in 23S rRNA + S-adenosyl-L-methionine = N(3)-methylpseudouridine(1915) in 23S rRNA + S-adenosyl-L-homocysteine + H(+). Functionally, specifically methylates the pseudouridine at position 1915 (m3Psi1915) in 23S rRNA. The chain is Ribosomal RNA large subunit methyltransferase H from Prochlorococcus marinus (strain MIT 9215).